The sequence spans 187 residues: Peptide deformylase (187 aa).

Positions 107 and 149 each coordinate Fe cation. Residue Glu150 is part of the active site. His153 is a Fe cation binding site.

It belongs to the polypeptide deformylase family. It depends on Fe(2+) as a cofactor.

It catalyses the reaction N-terminal N-formyl-L-methionyl-[peptide] + H2O = N-terminal L-methionyl-[peptide] + formate. In terms of biological role, removes the formyl group from the N-terminal Met of newly synthesized proteins. Requires at least a dipeptide for an efficient rate of reaction. N-terminal L-methionine is a prerequisite for activity but the enzyme has broad specificity at other positions. This is Peptide deformylase from Microchaete diplosiphon (Fremyella diplosiphon).